The primary structure comprises 250 residues: Ferritin-2, chloroplastic (250 aa).

A chloroplast-targeting transit peptide spans 1 to 43 (MLLRTAAASSLSLFNPNAEPSRSVPVLANNASRLVVRAAKGST). Residues 44-76 (NHRALTGVIFEPFEEVKKELDLVPTVPQASLAR) are extension peptide (EP). The 154-residue stretch at 77-230 (QKYVDESEAA…EYVAQLRRVG (154 aa)) folds into the Ferritin-like diiron domain. Residues Glu-94, Glu-129, His-132, Glu-178, and Gln-212 each coordinate Fe cation.

The protein belongs to the ferritin family. Oligomer of 24 subunits. There are two types of subunits: L (light) chain and H (heavy) chain. The major chain can be light or heavy, depending on the species and tissue type. The functional molecule forms a roughly spherical shell with a diameter of 12 nm and contains a central cavity into which the insoluble mineral iron core is deposited.

It is found in the plastid. It localises to the chloroplast. The catalysed reaction is 4 Fe(2+) + O2 + 4 H(+) = 4 Fe(3+) + 2 H2O. Functionally, stores iron in a soluble, non-toxic, readily available form. Important for iron homeostasis. Has ferroxidase activity. Iron is taken up in the ferrous form and deposited as ferric hydroxides after oxidation. The protein is Ferritin-2, chloroplastic (PFE2) of Vigna unguiculata (Cowpea).